We begin with the raw amino-acid sequence, 634 residues long: Probable LRR receptor-like serine/threonine-protein kinase At2g23950 (634 aa).

The signal sequence occupies residues 1 to 27; it reads MVVMKLITMKIFSVLLLLCFFVTCSLS. The Extracellular portion of the chain corresponds to 28 to 236; sequence SEPRNPEVEA…SSGRRTNILA (209 aa). 2 N-linked (GlcNAc...) asparagine glycosylation sites follow: N96 and N109. LRR repeat units follow at residues 99–121, 123–145, 147–167, and 171–193; these read NLRQ…ICSL, KLQT…VNQL, NLQY…ASLS, and HLSF…PART. N155 is a glycosylation site (N-linked (GlcNAc...) asparagine). Residues 237–257 form a helical membrane-spanning segment; the sequence is VALGVSLGFAVSVILSLGFIW. At 258 to 634 the chain is on the cytoplasmic side; the sequence is YRKKQRRLTM…SFAMELSGPR (377 aa). Residue T296 is modified to Phosphothreonine. The region spanning 299 to 554 is the Protein kinase domain; the sequence is FSSKSILGAG…QVALLCTQFL (256 aa). 305 to 313 is an ATP binding site; it reads LGAGGFGNV. T322 is modified (phosphothreonine). K327 provides a ligand contact to ATP. 2 positions are modified to phosphoserine: S380 and S383. Position 395 is a phosphothreonine (T395). Residue D422 is the Proton acceptor of the active site. Residues T455, T456, and T461 each carry the phosphothreonine modification. Position 469 is a phosphotyrosine (Y469). Residue S471 is modified to Phosphoserine. The residue at position 472 (T472) is a Phosphothreonine. At S476 the chain carries Phosphoserine. Position 551 is a phosphothreonine (T551).

Belongs to the protein kinase superfamily. Ser/Thr protein kinase family.

It is found in the membrane. It carries out the reaction L-seryl-[protein] + ATP = O-phospho-L-seryl-[protein] + ADP + H(+). The catalysed reaction is L-threonyl-[protein] + ATP = O-phospho-L-threonyl-[protein] + ADP + H(+). This chain is Probable LRR receptor-like serine/threonine-protein kinase At2g23950, found in Arabidopsis thaliana (Mouse-ear cress).